An 82-amino-acid polypeptide reads, in one-letter code: Myrmicitoxin(1)-Pm3a (82 aa).

The first 23 residues, Met1–Ala23, serve as a signal peptide directing secretion. Residues Thr24–Pro59 constitute a propeptide that is removed on maturation. Leu81 carries the post-translational modification Leucine amide.

This sequence belongs to the formicidae venom clade 1 family. Expressed by the venom gland.

Its subcellular location is the secreted. Functionally, toxin that causes a slowly developing temporary paralysis when intrathoracically injected into insects (blowflies). Does not cause spontaneous nocifensive behaviors by intraplantar injection in mice. The polypeptide is Myrmicitoxin(1)-Pm3a (Pogonomyrmex maricopa (Maricopa harvester ant)).